We begin with the raw amino-acid sequence, 512 residues long: Cytochrome P450 71BT1 (512 aa).

The signal sequence occupies residues 1 to 24 (MENLFIFLFALLLFCFMLLKLSKK). N-linked (GlcNAc...) asparagine glycans are attached at residues Asn-111 and Asn-168. Heme is bound at residue Cys-447.

This sequence belongs to the cytochrome P450 family.

In Catharanthus roseus (Madagascar periwinkle), this protein is Cytochrome P450 71BT1.